A 59-amino-acid polypeptide reads, in one-letter code: Large ribosomal subunit protein uL30 (59 aa).

This sequence belongs to the universal ribosomal protein uL30 family. As to quaternary structure, part of the 50S ribosomal subunit.

This is Large ribosomal subunit protein uL30 from Syntrophotalea carbinolica (strain DSM 2380 / NBRC 103641 / GraBd1) (Pelobacter carbinolicus).